The chain runs to 334 residues: Ferredoxin--NADP reductase (334 aa).

FAD-binding residues include Asp33, Gln41, Tyr46, Ala86, Phe120, Asp286, and Thr327.

This sequence belongs to the ferredoxin--NADP reductase type 2 family. In terms of assembly, homodimer. FAD serves as cofactor.

It catalyses the reaction 2 reduced [2Fe-2S]-[ferredoxin] + NADP(+) + H(+) = 2 oxidized [2Fe-2S]-[ferredoxin] + NADPH. The sequence is that of Ferredoxin--NADP reductase from Rickettsia massiliae (strain Mtu5).